A 109-amino-acid chain; its full sequence is Preprofallaxidin-8 (109 aa).

The N-terminal stretch at 1–22 (MASLKKSLFLVLFLGLLSLSIC) is a signal peptide. A propeptide spanning residues 23–46 (EEQKRENEEDAEDENHEEESEEKR) is cleaved from the precursor. Residues 27-46 (RENEEDAEDENHEEESEEKR) are disordered. Acidic residues predominate over residues 30 to 42 (EEDAEDENHEEES). At leucine 62 the chain carries Leucine amide. The propeptide occupies 66–70 (SEEKR). Methionine 75 is subject to Methionine amide. A propeptide spanning residues 79–83 (SEEKR) is cleaved from the precursor. Methionine 88 is modified (methionine amide). Propeptides lie at residues 92–96 (SEEKR) and alanine 108.

It belongs to the frog skin active peptide (FSAP) family. Brevinin subfamily. In terms of tissue distribution, expressed by the skin glands.

The protein localises to the secreted. Fallaxidin-2.1 shows no antibacterial activity against Gram-positive or Gram-negative bacteria. Does not inhibit the formation of NO by neuronal nitric oxide synthase. Has no effect on splenocyte proliferation or smooth muscle contraction. Its function is as follows. Fallaxidin-3.2 shows antibacterial activity against the Gram-positive bacteria E.faecalis (MIC=100 uM) and L.lactis (MIC=500 uM). No antibacterial activity against the Gram-positive bacteria B.cereus, L.innocua, M.luteus, S.epidermidis, S.uberis and S.aureus, or the Gram-negative bacteria E.cloacae and E.coli. This Litoria fallax (Eastern dwarf tree frog) protein is Preprofallaxidin-8.